A 177-amino-acid polypeptide reads, in one-letter code: Inorganic pyrophosphatase (177 aa).

3 residues coordinate substrate: Lys-34, Arg-48, and Tyr-60. 3 residues coordinate Mg(2+): Asp-70, Asp-75, and Asp-107. Tyr-144 is a binding site for substrate.

Belongs to the PPase family. As to quaternary structure, homohexamer. The cofactor is Mg(2+).

It localises to the cytoplasm. It carries out the reaction diphosphate + H2O = 2 phosphate + H(+). Its function is as follows. Catalyzes the hydrolysis of inorganic pyrophosphate (PPi) forming two phosphate ions. The polypeptide is Inorganic pyrophosphatase (Picrophilus torridus (strain ATCC 700027 / DSM 9790 / JCM 10055 / NBRC 100828 / KAW 2/3)).